Here is a 361-residue protein sequence, read N- to C-terminus: DNA replication and repair protein RecF (361 aa).

30 to 37 (GANGSGKT) contacts ATP.

The protein belongs to the RecF family.

The protein resides in the cytoplasm. The RecF protein is involved in DNA metabolism; it is required for DNA replication and normal SOS inducibility. RecF binds preferentially to single-stranded, linear DNA. It also seems to bind ATP. The protein is DNA replication and repair protein RecF of Chromohalobacter salexigens (strain ATCC BAA-138 / DSM 3043 / CIP 106854 / NCIMB 13768 / 1H11).